The following is a 176-amino-acid chain: Large ribosomal subunit protein uL6 (176 aa).

The protein belongs to the universal ribosomal protein uL6 family. In terms of assembly, part of the 50S ribosomal subunit.

In terms of biological role, this protein binds to the 23S rRNA, and is important in its secondary structure. It is located near the subunit interface in the base of the L7/L12 stalk, and near the tRNA binding site of the peptidyltransferase center. In Burkholderia cenocepacia (strain HI2424), this protein is Large ribosomal subunit protein uL6.